A 519-amino-acid chain; its full sequence is Probable FAD synthase (519 aa).

The segment at 17–108 (AILVIGDEIL…TDQMQFSDEI (92 aa)) is molybdenum cofactor biosynthesis protein-like. Residues 328–485 (QIALSFNGGK…SLGGRDNTVK (158 aa)) are FAD synthase.

The protein in the N-terminal section; belongs to the MoaB/Mog family. This sequence in the C-terminal section; belongs to the PAPS reductase family. FAD1 subfamily. Requires Mg(2+) as cofactor.

The catalysed reaction is FMN + ATP + H(+) = FAD + diphosphate. It participates in cofactor biosynthesis; FAD biosynthesis; FAD from FMN: step 1/1. In terms of biological role, catalyzes the adenylation of flavin mononucleotide (FMN) to form flavin adenine dinucleotide (FAD) coenzyme. In Caenorhabditis elegans, this protein is Probable FAD synthase.